The following is a 494-amino-acid chain: Glutamyl-tRNA(Gln) amidotransferase subunit A (494 aa).

Catalysis depends on charge relay system residues K72 and S147. S171 functions as the Acyl-ester intermediate in the catalytic mechanism.

This sequence belongs to the amidase family. GatA subfamily. As to quaternary structure, heterotrimer of A, B and C subunits.

The enzyme catalyses L-glutamyl-tRNA(Gln) + L-glutamine + ATP + H2O = L-glutaminyl-tRNA(Gln) + L-glutamate + ADP + phosphate + H(+). Functionally, allows the formation of correctly charged Gln-tRNA(Gln) through the transamidation of misacylated Glu-tRNA(Gln) in organisms which lack glutaminyl-tRNA synthetase. The reaction takes place in the presence of glutamine and ATP through an activated gamma-phospho-Glu-tRNA(Gln). The polypeptide is Glutamyl-tRNA(Gln) amidotransferase subunit A (Methylacidiphilum infernorum (isolate V4) (Methylokorus infernorum (strain V4))).